The following is a 363-amino-acid chain: UDP-N-acetylglucosamine--N-acetylmuramyl-(pentapeptide) pyrophosphoryl-undecaprenol N-acetylglucosamine transferase (363 aa).

UDP-N-acetyl-alpha-D-glucosamine is bound by residues T14–G16, R171, S200, and Q290.

Belongs to the glycosyltransferase 28 family. MurG subfamily.

The protein localises to the cell inner membrane. The catalysed reaction is di-trans,octa-cis-undecaprenyl diphospho-N-acetyl-alpha-D-muramoyl-L-alanyl-D-glutamyl-meso-2,6-diaminopimeloyl-D-alanyl-D-alanine + UDP-N-acetyl-alpha-D-glucosamine = di-trans,octa-cis-undecaprenyl diphospho-[N-acetyl-alpha-D-glucosaminyl-(1-&gt;4)]-N-acetyl-alpha-D-muramoyl-L-alanyl-D-glutamyl-meso-2,6-diaminopimeloyl-D-alanyl-D-alanine + UDP + H(+). The protein operates within cell wall biogenesis; peptidoglycan biosynthesis. In terms of biological role, cell wall formation. Catalyzes the transfer of a GlcNAc subunit on undecaprenyl-pyrophosphoryl-MurNAc-pentapeptide (lipid intermediate I) to form undecaprenyl-pyrophosphoryl-MurNAc-(pentapeptide)GlcNAc (lipid intermediate II). This is UDP-N-acetylglucosamine--N-acetylmuramyl-(pentapeptide) pyrophosphoryl-undecaprenol N-acetylglucosamine transferase from Borrelia garinii subsp. bavariensis (strain ATCC BAA-2496 / DSM 23469 / PBi) (Borreliella bavariensis).